We begin with the raw amino-acid sequence, 664 residues long: DNA primase (664 aa).

The CHC2-type zinc finger occupies 40 to 64; the sequence is CPFHKEKTPSFTVSPDKQFYYCFGC. Residues 94–104 are compositionally biased toward basic and acidic residues; sequence GMDVPREERGG. Positions 94 to 115 are disordered; it reads GMDVPREERGGRGHTPRQPTDS. The Toprim domain maps to 262-344; that stretch reads DEIMVVEGYM…GKRVRFLFLP (83 aa). The Mg(2+) site is built by Glu-268, Asp-312, and Asp-314. A disordered region spans residues 483-521; that stretch reads PRKSWNKDKKPWDGKKWDGKKKWDKGGRGDFKAPQRTPV. Over residues 487 to 515 the composition is skewed to basic and acidic residues; that stretch reads WNKDKKPWDGKKWDGKKKWDKGGRGDFKA.

Belongs to the DnaG primase family. As to quaternary structure, monomer. Interacts with DnaB. The cofactor is Zn(2+). Requires Mg(2+) as cofactor.

The enzyme catalyses ssDNA + n NTP = ssDNA/pppN(pN)n-1 hybrid + (n-1) diphosphate.. RNA polymerase that catalyzes the synthesis of short RNA molecules used as primers for DNA polymerase during DNA replication. This is DNA primase from Pseudomonas aeruginosa (strain ATCC 15692 / DSM 22644 / CIP 104116 / JCM 14847 / LMG 12228 / 1C / PRS 101 / PAO1).